A 333-amino-acid chain; its full sequence is Foldase protein PrsA (333 aa).

The signal sequence occupies residues 1–19; the sequence is MKKRHLLIAGLACMTILGA. The N-palmitoyl cysteine moiety is linked to residue cysteine 20. Residue cysteine 20 is the site of S-diacylglycerol cysteine attachment. A PpiC domain is found at 155 to 245; that stretch reads LIEVEASHIL…YGYHIILVTD (91 aa). The interval 291–333 is disordered; it reads GLFDLPDAPPVEDTPEIDGEDASDEAEDQAEDADENAEEEDES. Positions 303–333 are enriched in acidic residues; sequence DTPEIDGEDASDEAEDQAEDADENAEEEDES.

The protein belongs to the PrsA family.

It localises to the cell membrane. The catalysed reaction is [protein]-peptidylproline (omega=180) = [protein]-peptidylproline (omega=0). Its function is as follows. Plays a major role in protein secretion by helping the post-translocational extracellular folding of several secreted proteins. The chain is Foldase protein PrsA from Halalkalibacterium halodurans (strain ATCC BAA-125 / DSM 18197 / FERM 7344 / JCM 9153 / C-125) (Bacillus halodurans).